Consider the following 372-residue polypeptide: Aminomethyltransferase (372 aa).

It belongs to the GcvT family. As to quaternary structure, the glycine cleavage system is composed of four proteins: P, T, L and H.

It catalyses the reaction N(6)-[(R)-S(8)-aminomethyldihydrolipoyl]-L-lysyl-[protein] + (6S)-5,6,7,8-tetrahydrofolate = N(6)-[(R)-dihydrolipoyl]-L-lysyl-[protein] + (6R)-5,10-methylene-5,6,7,8-tetrahydrofolate + NH4(+). Its function is as follows. The glycine cleavage system catalyzes the degradation of glycine. This is Aminomethyltransferase from Burkholderia ambifaria (strain MC40-6).